We begin with the raw amino-acid sequence, 354 residues long: UDP-N-acetylglucosamine--N-acetylmuramyl-(pentapeptide) pyrophosphoryl-undecaprenol N-acetylglucosamine transferase (354 aa).

UDP-N-acetyl-alpha-D-glucosamine is bound by residues 12–14, asparagine 124, arginine 163, serine 187, isoleucine 240, and glutamine 285; that span reads TGG.

It belongs to the glycosyltransferase 28 family. MurG subfamily.

The protein localises to the cell inner membrane. It carries out the reaction di-trans,octa-cis-undecaprenyl diphospho-N-acetyl-alpha-D-muramoyl-L-alanyl-D-glutamyl-meso-2,6-diaminopimeloyl-D-alanyl-D-alanine + UDP-N-acetyl-alpha-D-glucosamine = di-trans,octa-cis-undecaprenyl diphospho-[N-acetyl-alpha-D-glucosaminyl-(1-&gt;4)]-N-acetyl-alpha-D-muramoyl-L-alanyl-D-glutamyl-meso-2,6-diaminopimeloyl-D-alanyl-D-alanine + UDP + H(+). Its pathway is cell wall biogenesis; peptidoglycan biosynthesis. Cell wall formation. Catalyzes the transfer of a GlcNAc subunit on undecaprenyl-pyrophosphoryl-MurNAc-pentapeptide (lipid intermediate I) to form undecaprenyl-pyrophosphoryl-MurNAc-(pentapeptide)GlcNAc (lipid intermediate II). The chain is UDP-N-acetylglucosamine--N-acetylmuramyl-(pentapeptide) pyrophosphoryl-undecaprenol N-acetylglucosamine transferase from Methylococcus capsulatus (strain ATCC 33009 / NCIMB 11132 / Bath).